We begin with the raw amino-acid sequence, 967 residues long: Serine/threonine-protein kinase/endoribonuclease ire-1 (967 aa).

The signal sequence occupies residues 1–21 (MRATFHLFTFIFLLLFSSVIC). The Lumenal portion of the chain corresponds to 22 to 438 (ISTPGFRNDH…LLLLNNHPIP (417 aa)). 2 N-linked (GlcNAc...) asparagine glycosylation sites follow: asparagine 100 and asparagine 188. Residues 439–455 (FYATLVTMFALLLTVIW) traverse the membrane as a helical segment. Over 456 to 967 (QCGRQWDQQK…IKKKSNPNTD (512 aa)) the chain is Cytoplasmic. The interval 474–494 (EIVNNPGESRSAQTSKQSNRG) is disordered. Positions 479–494 (PGESRSAQTSKQSNRG) are enriched in polar residues. The Protein kinase domain occupies 518 to 778 (YSPSDILGTG…ADAVLNHPFF (261 aa)). Residues 524–532 (LGTGCEGTV) and lysine 546 each bind ATP. Aspartate 636 (proton acceptor) is an active-site residue. The residue at position 672 (serine 672) is a Phosphoserine; by autocatalysis. A KEN domain is found at 781 to 909 (SEKRLAYFSD…EAVFKRYYSD (129 aa)). The interval 948–967 (RTPLKLDKRNIKKKSNPNTD) is disordered. The segment covering 957 to 967 (NIKKKSNPNTD) has biased composition (basic residues).

Belongs to the protein kinase superfamily. Ser/Thr protein kinase family. The cofactor is Mg(2+). Post-translationally, autophosphorylated mainly on serine residues.

Its subcellular location is the endoplasmic reticulum membrane. It catalyses the reaction L-seryl-[protein] + ATP = O-phospho-L-seryl-[protein] + ADP + H(+). The catalysed reaction is L-threonyl-[protein] + ATP = O-phospho-L-threonyl-[protein] + ADP + H(+). Its activity is regulated as follows. The kinase domain is activated by trans-autophosphorylation. Kinase activity is required for activation of the endoribonuclease domain. In terms of biological role, senses unfolded proteins in the lumen of the endoplasmic reticulum via its N-terminal domain which leads to enzyme auto-activation. The active endoribonuclease domain splices xbp-1 precursor mRNA to produce the mature form which then induces transcription of UPR target genes. Unfolded protein response (UPR) transcriptional activation by ire-1, as well as translational attenuation by pek-1 in a complementary pathway, maintains ER homeostasis. Regulates the transcriptional up-regulation of nucleoside-diphosphatase apy-1 and many other genes, upon ER stress. By activating the UPR pathway during non-lethal hypoxia pre-conditioning, confers adaptive protection to subsequent exposure to hypoxia. ire-1 and pek-1 are redundant genes that control a pathway essential for larval development and survival. Plays a role in the nuclear retention of unspliced mRNAs. This chain is Serine/threonine-protein kinase/endoribonuclease ire-1, found in Caenorhabditis elegans.